Here is a 1096-residue protein sequence, read N- to C-terminus: Constitutive coactivator of PPAR-gamma-like protein 2 (1096 aa).

Positions 35-59 are enriched in low complexity; sequence QQQHLHRQLPPTAALAPGAPRAARG. Disordered regions lie at residues 35–113, 508–579, and 971–1096; these read QQQH…PPQL, NYLP…DGEP, and SRSS…RKED. Arg-58 is subject to Omega-N-methylarginine. Basic residues predominate over residues 82-95; sequence TRHHHPAHHFHHHG. Positions 101-113 are enriched in pro residues; that stretch reads LHPPLPPPPPPQL. The segment covering 540 to 559 has biased composition (basic and acidic residues); sequence HITEAFHHQPEWGNPNRDRG. Position 977 is an omega-N-methylarginine (Arg-977). Basic and acidic residues-rich tracts occupy residues 1041–1050 and 1076–1096; these read IKEEKSDHRL and NREK…RKED. Lys-1042 is covalently cross-linked (Glycyl lysine isopeptide (Lys-Gly) (interchain with G-Cter in SUMO2)).

This sequence belongs to the constitutive coactivator of PPAR-gamma family. In terms of tissue distribution, expressed at low levels in a number of tissues.

In Homo sapiens (Human), this protein is Constitutive coactivator of PPAR-gamma-like protein 2 (FAM120C).